The following is a 211-amino-acid chain: Arginine exporter protein ArgO (211 aa).

Residues 1-38 lie on the Cytoplasmic side of the membrane; it reads MFSYYFQGLALGAAMILPLGPQNAFVMNQGIRRQYHIM. Residues 39–58 form a helical membrane-spanning segment; sequence IALLCAISDLVLICAGIFGG. Topologically, residues 59–63 are periplasmic; that stretch reads SALLM. Residues 64 to 91 form a helical membrane-spanning segment; that stretch reads QSPWLLALVTWGGVAFLLWYGFGAFKTA. Topologically, residues 92–102 are cytoplasmic; sequence MSSNIELASAE. Residues 103 to 130 form a helical membrane-spanning segment; that stretch reads VMKQGRWKIIATMLAVTWLNPHVYLDTF. Residues 131 to 140 lie on the Periplasmic side of the membrane; that stretch reads VVLGSLGGQL. Residues 141–170 traverse the membrane as a helical segment; sequence DVEPKRWFALGTISASFLWFFGLALLAAWL. Residues 171 to 173 are Cytoplasmic-facing; it reads APR. The helical transmembrane segment at 174–200 threads the bilayer; sequence LRTAKAQRIINLVVGCVMWFIALQLAR. Residues 201–211 are Periplasmic-facing; sequence DGIAHAQALFS.

This sequence belongs to the LysE/ArgO transporter (TC 2.A.75) family. As to quaternary structure, monomer.

It localises to the cell inner membrane. The enzyme catalyses L-arginine(in) = L-arginine(out). In terms of biological role, involved in the export of arginine. Important to control the intracellular level of arginine and the correct balance between arginine and lysine. May also be involved in the export of canavanine (a plant-derived antimetabolite). In Escherichia coli (strain K12), this protein is Arginine exporter protein ArgO.